The following is a 381-amino-acid chain: Cytochrome b (381 aa).

Transmembrane regions (helical) follow at residues 34-54 (FGSLLGICLITPILTGVMLAM), 78-99 (WMIRNLHANGASFFFICIYLHI), 114-134 (WNTGIILLLTLMATAFVGYVL), and 179-199 (FFALHFLLPFLIAGISIVHLT). Residues histidine 84 and histidine 98 each contribute to the heme b site. Residues histidine 183 and histidine 197 each coordinate heme b. Histidine 202 is an a ubiquinone binding site. 4 helical membrane-spanning segments follow: residues 227–247 (MKDLLGFTLLSLPFLALAFFT), 289–309 (LGGVLALAASVLILFTIPLLH), 321–341 (MSQILFWLLVANLFILTWVGS), and 348–368 (FIIIGQLASLSYFTILLFLFP).

This sequence belongs to the cytochrome b family. In terms of assembly, the cytochrome bc1 complex contains 11 subunits: 3 respiratory subunits (MT-CYB, CYC1 and UQCRFS1), 2 core proteins (UQCRC1 and UQCRC2) and 6 low-molecular weight proteins (UQCRH/QCR6, UQCRB/QCR7, UQCRQ/QCR8, UQCR10/QCR9, UQCR11/QCR10 and a cleavage product of UQCRFS1). This cytochrome bc1 complex then forms a dimer. Requires heme b as cofactor.

It is found in the mitochondrion inner membrane. In terms of biological role, component of the ubiquinol-cytochrome c reductase complex (complex III or cytochrome b-c1 complex) that is part of the mitochondrial respiratory chain. The b-c1 complex mediates electron transfer from ubiquinol to cytochrome c. Contributes to the generation of a proton gradient across the mitochondrial membrane that is then used for ATP synthesis. In Nothoprocta perdicaria (Chilean tinamou), this protein is Cytochrome b (MT-CYB).